We begin with the raw amino-acid sequence, 395 residues long: Elongation factor Tu (395 aa).

The region spanning 10 to 204 (KEHANIGTIG…AVDDYIPTPE (195 aa)) is the tr-type G domain. Positions 19–26 (GHVDHGKT) are G1. 19-26 (GHVDHGKT) is a binding site for GTP. Residue T26 coordinates Mg(2+). Residues 60–64 (GITIN) form a G2 region. A G3 region spans residues 81 to 84 (DCPG). GTP is bound by residues 81-85 (DCPGH) and 136-139 (NKAD). The segment at 136–139 (NKAD) is G4. The tract at residues 174 to 176 (SAL) is G5.

Belongs to the TRAFAC class translation factor GTPase superfamily. Classic translation factor GTPase family. EF-Tu/EF-1A subfamily. As to quaternary structure, monomer.

It is found in the cytoplasm. It carries out the reaction GTP + H2O = GDP + phosphate + H(+). GTP hydrolase that promotes the GTP-dependent binding of aminoacyl-tRNA to the A-site of ribosomes during protein biosynthesis. This is Elongation factor Tu from Staphylococcus carnosus (strain TM300).